The sequence spans 133 residues: ATP synthase epsilon chain, chloroplastic (133 aa).

This sequence belongs to the ATPase epsilon chain family. In terms of assembly, F-type ATPases have 2 components, CF(1) - the catalytic core - and CF(0) - the membrane proton channel. CF(1) has five subunits: alpha(3), beta(3), gamma(1), delta(1), epsilon(1). CF(0) has three main subunits: a, b and c.

The protein resides in the plastid. It is found in the chloroplast thylakoid membrane. Produces ATP from ADP in the presence of a proton gradient across the membrane. The sequence is that of ATP synthase epsilon chain, chloroplastic from Nicotiana sylvestris (Wood tobacco).